A 98-amino-acid chain; its full sequence is NADH-ubiquinone oxidoreductase chain 4L (98 aa).

The next 3 helical transmembrane spans lie at 1–21 (MSPI…GMLV), 26–46 (LMAS…MIAL), and 61–81 (IILL…LVSI).

Belongs to the complex I subunit 4L family. As to quaternary structure, core subunit of respiratory chain NADH dehydrogenase (Complex I) which is composed of 45 different subunits.

Its subcellular location is the mitochondrion inner membrane. It catalyses the reaction a ubiquinone + NADH + 5 H(+)(in) = a ubiquinol + NAD(+) + 4 H(+)(out). Core subunit of the mitochondrial membrane respiratory chain NADH dehydrogenase (Complex I) which catalyzes electron transfer from NADH through the respiratory chain, using ubiquinone as an electron acceptor. Part of the enzyme membrane arm which is embedded in the lipid bilayer and involved in proton translocation. This is NADH-ubiquinone oxidoreductase chain 4L (MT-ND4L) from Chlorocebus sabaeus (Green monkey).